We begin with the raw amino-acid sequence, 147 residues long: Large ribosomal subunit protein uL13 (147 aa).

Belongs to the universal ribosomal protein uL13 family. Part of the 50S ribosomal subunit.

In terms of biological role, this protein is one of the early assembly proteins of the 50S ribosomal subunit, although it is not seen to bind rRNA by itself. It is important during the early stages of 50S assembly. The chain is Large ribosomal subunit protein uL13 from Mycobacterium marinum (strain ATCC BAA-535 / M).